The following is a 181-amino-acid chain: Oligoribonuclease (181 aa).

The Exonuclease domain maps to 8–171 (LIWIDLEMTG…DDIRESVAEL (164 aa)). Tyr-129 is an active-site residue.

Belongs to the oligoribonuclease family.

It is found in the cytoplasm. In terms of biological role, 3'-to-5' exoribonuclease specific for small oligoribonucleotides. The polypeptide is Oligoribonuclease (Yersinia pseudotuberculosis serotype O:1b (strain IP 31758)).